The chain runs to 831 residues: MSLTANDESPKPKKNALLKNLEIDDLIHSQFVRSDTNGHRTTRRLFNSDASISHRIRGSVRSDKGLNKIKKGLISQQSKLASENSSQNIVNRDNKMGAVSFPIIEPNIEVSEELKVRIKYDSIKFFNFERLISKSSVIAPLVNKNITSSGPLIGFQRRVNRLKQTWDLATENMEYPYSSDNTPFRDNDSWQWYVPYGGTIKKMKDFSTKRTLPTWEDKIKFLTFLENSKSATYINGNVSLCNHNETDQENEDRKKRKGKVPRIKNKVWFSQIEYIVLRNYEIKPWYTSPFPEHINQNKMVFICEFCLKYMTSRYTFYRHQLKCLTFKPPGNEIYRDGKLSVWEIDGRENVLYCQNLCLLAKCFINSKTLYYDVEPFIFYILTEREDTENHPYQNAAKFHFVGYFSKEKFNSNDYNLSCILTLPIYQRKGYGQFLMEFSYLLSRKESKFGTPEKPLSDLGLLTYRTFWKIKCAEVLLKLRDSARRRSNNKNEDTFQQVSLNDIAKLTGMIPTDVVFGLEQLQVLYRHKTRSLSSLDDFNYIIKIDSWNRIENIYKTWSSKNYPRVKYDKLLWEPIILGPSFGINGMMNLEPTALADEALTNETMAPVISNNTHIENYNNSRAHNKRRRRRRRSSEHKTSKLHVNNIIEPEVPATDFFEDTVSSLTEYMCDYKNTNNDRLIYQAEKRVLESIHDRKGIPRSKFSTETHWELCFTIKNSETPLGNHAARRNDTGISSLEQDEVENDVDTELYVGENAKEDEDEDEDFTLDDDIEDEQISEENDEEEDTYEEDSDDDEDGKRKGQEQDENDIESHIRKERVRKRRKITLIEDDEE.

In terms of domain architecture, MYST-type HAT spans 267–573; the sequence is VWFSQIEYIV…VKYDKLLWEP (307 aa). Residues 300–325 form a C2HC MYST-type zinc finger; it reads VFICEFCLKYMTSRYTFYRHQLKCLT. Lys367 is modified (N6-acetyllysine; by autocatalysis). Acetyl-CoA contacts are provided by residues 419–421 and 426–432; these read ILT and QRKGYGQ. The active-site Proton donor/acceptor is the Glu452. Acetyl-CoA is bound at residue Ser456. Disordered stretches follow at residues 614-639 and 719-813; these read ENYN…KTSK and PLGN…SHIR. The span at 621 to 633 shows a compositional bias: basic residues; that stretch reads AHNKRRRRRRRSS. Composition is skewed to acidic residues over residues 736 to 746 and 755 to 794; these read EQDEVENDVDT and KEDE…DDDE. The span at 795-812 shows a compositional bias: basic and acidic residues; that stretch reads DGKRKGQEQDENDIESHI.

This sequence belongs to the MYST (SAS/MOZ) family. Component of the NuA3 histone acetyltransferase (HAT) complex. The NuA3 HAT complex has 2 functionally distinct forms that participate in transcription. The NuA3a HAT complex is composed of at least NTO1, SAS3, TAF14, YNG1 and EAF6. The NuA3b HAT complex contains an additional subunit, PDP3. SAS3 interacts with CDC68/SPT16. In terms of processing, autoacetylation at Lys-367 is required for proper function.

Its subcellular location is the nucleus. It carries out the reaction L-lysyl-[protein] + acetyl-CoA = N(6)-acetyl-L-lysyl-[protein] + CoA + H(+). Catalytic component of the NuA3 histone acetyltransferase complex, that acetylates H3K14. The NuA3 HAT complex has 2 functionally distinct forms. NuA3a binds H3K4me3, through the PHD finger of YNG1, and acetylates H3K14 at the promoter region of actively transcribed genes to promote transcription initiation. NuA3b binds H3K36me3 at the coding regions of actively transcribed genes, through the PWWP domain of PDP3, and coordinates transcription elongation. In vitro, SAS3 acetylates free histones H3 and H4. It is involved in silencing the HMR locus. This Saccharomyces cerevisiae (strain ATCC 204508 / S288c) (Baker's yeast) protein is Histone acetyltransferase SAS3.